The primary structure comprises 512 residues: Ribose import ATP-binding protein RbsA 1 (512 aa).

2 consecutive ABC transporter domains span residues 8 to 244 (FRME…IGRE) and 257 to 502 (PEEK…LNIG). 40–47 (GENGAGKS) contributes to the ATP binding site.

It belongs to the ABC transporter superfamily. Ribose importer (TC 3.A.1.2.1) family. The complex is composed of an ATP-binding protein (RbsA), two transmembrane proteins (RbsC) and a solute-binding protein (RbsB).

It localises to the cell inner membrane. It catalyses the reaction D-ribose(out) + ATP + H2O = D-ribose(in) + ADP + phosphate + H(+). Its function is as follows. Part of the ABC transporter complex RbsABC involved in ribose import. Responsible for energy coupling to the transport system. In Rhizobium etli (strain ATCC 51251 / DSM 11541 / JCM 21823 / NBRC 15573 / CFN 42), this protein is Ribose import ATP-binding protein RbsA 1.